A 447-amino-acid polypeptide reads, in one-letter code: ATP-dependent protease ATPase subunit HslU (447 aa).

Residues isoleucine 18, 60 to 65 (GVGKTE), aspartate 259, glutamate 325, and arginine 397 contribute to the ATP site.

It belongs to the ClpX chaperone family. HslU subfamily. As to quaternary structure, a double ring-shaped homohexamer of HslV is capped on each side by a ring-shaped HslU homohexamer. The assembly of the HslU/HslV complex is dependent on binding of ATP.

The protein resides in the cytoplasm. ATPase subunit of a proteasome-like degradation complex; this subunit has chaperone activity. The binding of ATP and its subsequent hydrolysis by HslU are essential for unfolding of protein substrates subsequently hydrolyzed by HslV. HslU recognizes the N-terminal part of its protein substrates and unfolds these before they are guided to HslV for hydrolysis. The protein is ATP-dependent protease ATPase subunit HslU of Burkholderia lata (strain ATCC 17760 / DSM 23089 / LMG 22485 / NCIMB 9086 / R18194 / 383).